Reading from the N-terminus, the 81-residue chain is MSHKVKIYDTCIGCTQCVRACPLDVLEMVPWDGCKAAQIASSPRTEDCVGCKRCETACPTDFLSIRVYLGAETTRSMGLAY.

4Fe-4S ferredoxin-type domains are found at residues 1 to 31 and 39 to 68; these read MSHK…MVPW and IASS…IRVY. Positions 11, 14, 17, 21, 48, 51, 54, and 58 each coordinate [4Fe-4S] cluster.

In terms of assembly, the cyanobacterial PSI reaction center is composed of one copy each of PsaA,B,C,D,E,F,I,J,K,L,M and X, and forms trimeric complexes. [4Fe-4S] cluster serves as cofactor.

Its subcellular location is the cellular thylakoid membrane. The catalysed reaction is reduced [plastocyanin] + hnu + oxidized [2Fe-2S]-[ferredoxin] = oxidized [plastocyanin] + reduced [2Fe-2S]-[ferredoxin]. In terms of biological role, apoprotein for the two 4Fe-4S centers FA and FB of photosystem I (PSI); essential for photochemical activity. FB is the terminal electron acceptor of PSI, donating electrons to ferredoxin. The C-terminus interacts with PsaA/B/D and helps assemble the protein into the PSI complex. Required for binding of PsaD and PsaE to PSI. PSI is a plastocyanin/cytochrome c6-ferredoxin oxidoreductase, converting photonic excitation into a charge separation, which transfers an electron from the donor P700 chlorophyll pair to the spectroscopically characterized acceptors A0, A1, FX, FA and FB in turn. This chain is Photosystem I iron-sulfur center, found in Rippkaea orientalis (strain PCC 8801 / RF-1) (Cyanothece sp. (strain PCC 8801)).